Reading from the N-terminus, the 345-residue chain is S-adenosylmethionine:tRNA ribosyltransferase-isomerase (345 aa).

This sequence belongs to the QueA family. As to quaternary structure, monomer.

It is found in the cytoplasm. It catalyses the reaction 7-aminomethyl-7-carbaguanosine(34) in tRNA + S-adenosyl-L-methionine = epoxyqueuosine(34) in tRNA + adenine + L-methionine + 2 H(+). The protein operates within tRNA modification; tRNA-queuosine biosynthesis. Transfers and isomerizes the ribose moiety from AdoMet to the 7-aminomethyl group of 7-deazaguanine (preQ1-tRNA) to give epoxyqueuosine (oQ-tRNA). This Shewanella sp. (strain W3-18-1) protein is S-adenosylmethionine:tRNA ribosyltransferase-isomerase.